The primary structure comprises 188 residues: Diphosphoinositol polyphosphate phosphohydrolase DDP1 (188 aa).

Over residues 1–21 the composition is skewed to basic and acidic residues; the sequence is MGKTADNHGPVRSETAREGRE. The tract at residues 1 to 23 is disordered; that stretch reads MGKTADNHGPVRSETAREGRENQ. Residues 30 to 179 enclose the Nudix hydrolase domain; it reads GARLVAGCIC…KRPELLEALN (150 aa). 1D-myo-inositol hexakisphosphate contacts are provided by Arg32, Ser52, Ser53, and Lys63. Positions 32, 52, 53, and 63 each coordinate 5-diphospho-1D-myo-inositol 1,2,3,4,6-pentakisphosphate. The P(1),P(5)-bis(5'-adenosyl) pentaphosphate site is built by Arg32, Ser52, Ser53, and Lys63. Mg(2+) is bound by residues Lys63, Glu80, and Glu84. Residues 65 to 86 carry the Nudix box motif; that stretch reads GVEKDEPNYETTAQRETWEEAG. Asp100 provides a ligand contact to P(1),P(5)-bis(5'-adenosyl) pentaphosphate. 4 residues coordinate 1D-myo-inositol hexakisphosphate: Arg102, Arg129, Arg152, and Arg171. Residue Arg102 coordinates 5-diphospho-1D-myo-inositol 1,2,3,4,6-pentakisphosphate. Positions 152 and 171 each coordinate 5-diphospho-1D-myo-inositol 1,2,3,4,6-pentakisphosphate. Residues Arg152, Arg171, and Glu173 each coordinate P(1),P(5)-bis(5'-adenosyl) pentaphosphate.

It belongs to the Nudix hydrolase family. DIPP subfamily. The cofactor is Mg(2+). Mn(2+) is required as a cofactor. It depends on Zn(2+) as a cofactor.

It localises to the cytoplasm. Its subcellular location is the nucleus. It carries out the reaction diphospho-myo-inositol polyphosphate + H2O = myo-inositol polyphosphate + phosphate.. The catalysed reaction is P(1),P(6)-bis(5'-adenosyl) hexaphosphate + H2O = adenosine 5'-pentaphosphate + AMP + 2 H(+). The enzyme catalyses P(1),P(5)-bis(5'-adenosyl) pentaphosphate + H2O = adenosine 5'-tetraphosphate + AMP + 2 H(+). It catalyses the reaction [phosphate](n+1) + n H2O = (n+1) phosphate + n H(+). In terms of biological role, may eliminate potentially toxic dinucleoside polyphosphates during sporulation. Most active against diadenosine 5',5'''-P1,P6-hexaphosphate (Ap6A). Can also hydrolyze diadenosine 5',5'''-P1,P5-pentaphosphate (Ap5A), adenosine 5'-pentaphosphate (p5A), and adenosine 5'-tetraphosphate (p4A) are also substrates, but not diadenosine 5',5'''-P1,P4-tetraphosphate (Ap4A) or other dinucleotides, mononucleotides, nucleotide sugars, or nucleotide alcohols. Also cleaves a beta-phosphate from the diphosphate groups in PP-InsP5 (diphosphoinositol pentakisphosphate) and [PP]2-InsP4 (bisdiphosphoinositol tetrakisphosphate). Also has endopolyphosphatase activity. The protein is Diphosphoinositol polyphosphate phosphohydrolase DDP1 (DDP1) of Saccharomyces cerevisiae (strain ATCC 204508 / S288c) (Baker's yeast).